Here is a 154-residue protein sequence, read N- to C-terminus: Oleosin 16.4 kDa (154 aa).

An N-acetylalanine modification is found at alanine 2. Residues 2-33 form a polar region; it reads ADRDRSYRTFDQVVRGDRTNYQSGPSTTQVLT. A run of 3 helical transmembrane segments spans residues 31–51, 65–85, and 86–106; these read VLTV…AGLT, LFVI…MAVA, and GFLS…YVFN. Positions 34–105 are hydrophobic; sequence VLTLLPIGGT…TGLSSLSYVF (72 aa).

The protein belongs to the oleosin family.

It is found in the lipid droplet. It localises to the membrane. May have a structural role to stabilize the lipid body during desiccation of the seed by preventing coalescence of the oil. Probably interacts with both lipid and phospholipid moieties of lipid bodies. May also provide recognition signals for specific lipase anchorage in lipolysis during seedling growth. In Gossypium hirsutum (Upland cotton), this protein is Oleosin 16.4 kDa (MATP7).